A 306-amino-acid polypeptide reads, in one-letter code: Glutaminase (306 aa).

Residues serine 64, asparagine 115, glutamate 159, asparagine 166, tyrosine 190, tyrosine 242, and valine 260 each coordinate substrate.

It belongs to the glutaminase family. As to quaternary structure, homotetramer.

The catalysed reaction is L-glutamine + H2O = L-glutamate + NH4(+). This is Glutaminase from Vibrio atlanticus (strain LGP32) (Vibrio splendidus (strain Mel32)).